Reading from the N-terminus, the 448-residue chain is Probable D-serine dehydratase (448 aa).

Lys-119 carries the N6-(pyridoxal phosphate)lysine modification.

Belongs to the serine/threonine dehydratase family. DsdA subfamily. It depends on pyridoxal 5'-phosphate as a cofactor.

The catalysed reaction is D-serine = pyruvate + NH4(+). The protein is Probable D-serine dehydratase of Pseudomonas paraeruginosa (strain DSM 24068 / PA7) (Pseudomonas aeruginosa (strain PA7)).